Reading from the N-terminus, the 206-residue chain is Guanylate kinase (206 aa).

Residues 5-183 (FNLLILSGPS…SKEIILSIAK (179 aa)) enclose the Guanylate kinase-like domain. 12–19 (GPSGAGKS) is a binding site for ATP.

It belongs to the guanylate kinase family.

Its subcellular location is the cytoplasm. It catalyses the reaction GMP + ATP = GDP + ADP. Its function is as follows. Essential for recycling GMP and indirectly, cGMP. This is Guanylate kinase (gmk) from Helicobacter pylori (strain ATCC 700392 / 26695) (Campylobacter pylori).